A 256-amino-acid chain; its full sequence is Peptidyl-prolyl cis-trans isomerase FKBP19, chloroplastic (256 aa).

Residues Met1–Val29 constitute a chloroplast transit peptide. A thylakoid-targeting transit peptide spans Ala30–Ala88. Residues Gly135 to Val254 form the PPIase FKBP-type domain. At Ser164 the chain carries Phosphoserine.

This sequence belongs to the FKBP-type PPIase family.

The protein resides in the plastid. It is found in the chloroplast thylakoid lumen. It catalyses the reaction [protein]-peptidylproline (omega=180) = [protein]-peptidylproline (omega=0). In terms of biological role, PPIases accelerate the folding of proteins. It catalyzes the cis-trans isomerization of proline imidic peptide bonds in oligopeptides. The polypeptide is Peptidyl-prolyl cis-trans isomerase FKBP19, chloroplastic (FKBP19) (Arabidopsis thaliana (Mouse-ear cress)).